Reading from the N-terminus, the 186-residue chain is Inosine/xanthosine triphosphatase (186 aa).

Gln-75 lines the Mg(2+) pocket.

It belongs to the YjjX NTPase family. In terms of assembly, homodimer. Requires Mg(2+) as cofactor. Mn(2+) is required as a cofactor.

The catalysed reaction is XTP + H2O = XDP + phosphate + H(+). It carries out the reaction ITP + H2O = IDP + phosphate + H(+). Phosphatase that hydrolyzes non-canonical purine nucleotides such as XTP and ITP to their respective diphosphate derivatives. Probably excludes non-canonical purines from DNA/RNA precursor pool, thus preventing their incorporation into DNA/RNA and avoiding chromosomal lesions. This Shewanella baltica (strain OS185) protein is Inosine/xanthosine triphosphatase.